Here is a 493-residue protein sequence, read N- to C-terminus: E3 ubiquitin-protein ligase Hakai (493 aa).

Disordered stretches follow at residues 1–20 (MDHNDNDLQGTNSSASLGGL) and 28–61 (IKLISKQTNKTKPAPRAPRAMNRMPAKTQAGDEE). Polar residues predominate over residues 7 to 16 (DLQGTNSSAS). The segment at 109–149 (CDKCGLPIKMYGRMIPCKHVFCYDCAILHEKKGDKMCPGCN) adopts an RING-type zinc-finger fold. Residues 148–206 (CNEPVQRIEQCVRGSLFMCSIVQGCKRTYLSQRDLQAHINHRHMRAGKPVTRPPLEPVH) form an HYB domain region. The C2H2-type zinc finger occupies 164-190 (FMCSIVQGCKRTYLSQRDLQAHINHRH). Residues 253-493 (YNQPHEDIRP…DQARYRPYYQ (241 aa)) are disordered. Composition is skewed to pro residues over residues 262–276 (PPPAEMSMAPPPPRP), 342–352 (APPPPPPPPIS), 372–389 (APPPPMTSAPPPITPPPG), and 399–412 (MNHPPPGPPPPQHG). Residues 427–444 (NPNSLPQFSEDQGTLSPP) are compositionally biased toward polar residues. Pro residues predominate over residues 459–469 (PRGPPPPPRMQ). Residues 470–480 (GPPAQAPLAGP) are compositionally biased toward low complexity.

The protein belongs to the Hakai family. As to quaternary structure, homodimer. Interacts with tyrosine-phosphorylated SRC substrates. Component of the WMM complex, a N6-methyltransferase complex composed of a catalytic subcomplex, named MAC, and of an associated subcomplex, named MACOM. Component of the MACOM subcomplex.

The protein resides in the nucleus speckle. The protein localises to the nucleus. It is found in the nucleoplasm. It catalyses the reaction S-ubiquitinyl-[E2 ubiquitin-conjugating enzyme]-L-cysteine + [acceptor protein]-L-lysine = [E2 ubiquitin-conjugating enzyme]-L-cysteine + N(6)-ubiquitinyl-[acceptor protein]-L-lysine.. It functions in the pathway protein modification; protein ubiquitination. Its function is as follows. E3 ubiquitin-protein ligase that mediates ubiquitination of several tyrosine-phosphorylated Src substrates. Associated component of the WMM complex, a complex that mediates N6-methyladenosine (m6A) methylation of RNAs, a modification that plays a role in the efficiency of mRNA splicing and RNA processing. The polypeptide is E3 ubiquitin-protein ligase Hakai (Gallus gallus (Chicken)).